A 541-amino-acid polypeptide reads, in one-letter code: Calcium-dependent protein kinase 25 (541 aa).

The span at 1–11 (MGQCCTGGGKA) shows a compositional bias: gly residues. The disordered stretch occupies residues 1 to 74 (MGQCCTGGGK…AGPIGEVLER (74 aa)). Gly-2 carries N-myristoyl glycine lipidation. Residues 38 to 67 (AKQQPCSPAAKAAATEAAAAASSSKKPAGP) are compositionally biased toward low complexity. Residues 83–341 (YSIGKELGRG…AFQVLNHPWI (259 aa)) form the Protein kinase domain. Residues 89-97 (LGRGQFGVT) and Lys-112 contribute to the ATP site. The active-site Proton acceptor is Asp-207. Residues 347-377 (APDVPLDNVVLNRLKQFRAMNQFKKAALRII) are autoinhibitory domain. 4 EF-hand domains span residues 384–419 (EEIK…QGTK), 420–455 (FSDN…MNKM), 456–491 (DREE…QGLY), and 493–526 (ANEI…GSGC). Ca(2+) is bound by residues Asp-397, Asp-399, Ser-401, Thr-403, Glu-408, Asp-433, Asp-435, Asn-437, Glu-444, Asp-469, Asp-471, Ser-473, Tyr-475, Glu-480, Asp-504, Asn-506, Asp-508, Arg-510, and Glu-515.

It belongs to the protein kinase superfamily. Ser/Thr protein kinase family. CDPK subfamily. As to expression, specifically expressed in heading panicles, spikelets and mature pollen grains. Not expressed in vegetative tissues.

The protein resides in the membrane. It catalyses the reaction L-seryl-[protein] + ATP = O-phospho-L-seryl-[protein] + ADP + H(+). The enzyme catalyses L-threonyl-[protein] + ATP = O-phospho-L-threonyl-[protein] + ADP + H(+). With respect to regulation, activated by calcium. Autophosphorylation may play an important role in the regulation of the kinase activity. May play a role in signal transduction pathways that involve calcium as a second messenger. This is Calcium-dependent protein kinase 25 from Oryza sativa subsp. japonica (Rice).